Reading from the N-terminus, the 563-residue chain is L-lactate permease (563 aa).

The next 14 membrane-spanning stretches (helical) occupy residues 14–34, 37–57, 73–93, 131–151, 157–177, 194–214, 220–240, 249–269, 304–324, 381–401, 419–439, 448–468, 506–526, and 542–562; these read LLLSALAALVPIIFFFWALAI, MKGYTAGLATLGIALIIAVLV, AVYGLLPIGWIIVTSVFLYKI, GAAGFGAPVAISAALLVGLGF, AGICLIANTAPVAFGAIGIPI, MVGRQLPFLSVFIPLYLIIIM, ALEIWPAILVSGVSFAVVQYL, LPDVLSALVSMAALAVFLKWW, IFKAWSPFLLLTAMISVWGIP, LGSAGTAILIAAVLSKFITAI, LPILTIASVVGFAYVTNSSGM, ALTGSMFTFFSPVLGWLGVFI, VTGKMISPQSIAVACAAVGLA, and FLLLLVCIITFLQHHVFSWMI.

The protein belongs to the lactate permease family.

Its subcellular location is the cell membrane. Is the principal permease for the uptake of L-lactate in B.subtilis. The polypeptide is L-lactate permease (lutP) (Bacillus subtilis (strain 168)).